The sequence spans 155 residues: MSSVDEDLTPEQIAVLQKAFNSFDHQKTGSIPTEMVADILRLMGQPFDKKILEELIEEVDEDKSGRLEFGEFVQLAAKFIVEEDAEAMQKELREAFRLYDKQGNGFIPTTCLKEILKELDDQLTEQELDIMIEEIDSDGSGTVDFDEFMEMMTGE.

4 consecutive EF-hand domains span residues 11–46 (EQIA…MGQP), 47–82 (FDKK…FIVE), 87–122 (AMQK…LDDQ), and 123–155 (LTEQ…MTGE). Ca(2+) contacts are provided by aspartate 60, aspartate 62, serine 64, arginine 66, and glutamate 71. Aspartate 136, aspartate 138, serine 140, threonine 142, and glutamate 147 together coordinate Ca(2+).

This sequence belongs to the troponin C family. Present in both larval and adult muscles.

This is Troponin C, isoform 3 (TpnC73F) from Drosophila melanogaster (Fruit fly).